Reading from the N-terminus, the 303-residue chain is Ribosomal protein L11 methyltransferase (303 aa).

S-adenosyl-L-methionine-binding residues include Thr-146, Gly-167, Asp-189, and Asn-236.

The protein belongs to the methyltransferase superfamily. PrmA family.

It localises to the cytoplasm. The enzyme catalyses L-lysyl-[protein] + 3 S-adenosyl-L-methionine = N(6),N(6),N(6)-trimethyl-L-lysyl-[protein] + 3 S-adenosyl-L-homocysteine + 3 H(+). Its function is as follows. Methylates ribosomal protein L11. The protein is Ribosomal protein L11 methyltransferase of Acinetobacter baylyi (strain ATCC 33305 / BD413 / ADP1).